Reading from the N-terminus, the 325-residue chain is Serine/threonine-protein phosphatase 2A activator 1 (325 aa).

This sequence belongs to the PTPA-type PPIase family.

The protein resides in the cytoplasm. The protein localises to the nucleus. The enzyme catalyses [protein]-peptidylproline (omega=180) = [protein]-peptidylproline (omega=0). Functionally, PPIases accelerate the folding of proteins. It catalyzes the cis-trans isomerization of proline imidic peptide bonds in oligopeptides. Acts as a regulatory subunit for PP2A-like phosphatases modulating their activity or substrate specificity, probably by inducing a conformational change in the catalytic subunit, a direct target of the PPIase. Can reactivate inactive phosphatase PP2A-phosphatase methylesterase complexes (PP2Ai) in presence of ATP and Mg(2+) by dissociating the inactive form from the complex. The protein is Serine/threonine-protein phosphatase 2A activator 1 (rrd1) of Schizosaccharomyces pombe (strain 972 / ATCC 24843) (Fission yeast).